Here is a 266-residue protein sequence, read N- to C-terminus: tRNA pseudouridine synthase A (266 aa).

Catalysis depends on Asp57, which acts as the Nucleophile. Position 115 (Tyr115) interacts with substrate.

It belongs to the tRNA pseudouridine synthase TruA family. As to quaternary structure, homodimer.

It catalyses the reaction uridine(38/39/40) in tRNA = pseudouridine(38/39/40) in tRNA. Functionally, formation of pseudouridine at positions 38, 39 and 40 in the anticodon stem and loop of transfer RNAs. In Buchnera aphidicola subsp. Acyrthosiphon pisum (strain Tuc7), this protein is tRNA pseudouridine synthase A.